We begin with the raw amino-acid sequence, 278 residues long: Probable endonuclease 4 (278 aa).

Zn(2+) is bound by residues histidine 69, histidine 109, glutamate 145, aspartate 179, histidine 182, histidine 214, aspartate 227, histidine 229, and glutamate 259.

It belongs to the AP endonuclease 2 family. The cofactor is Zn(2+).

The catalysed reaction is Endonucleolytic cleavage to 5'-phosphooligonucleotide end-products.. Functionally, endonuclease IV plays a role in DNA repair. It cleaves phosphodiester bonds at apurinic or apyrimidinic (AP) sites, generating a 3'-hydroxyl group and a 5'-terminal sugar phosphate. This chain is Probable endonuclease 4, found in Bacteroides fragilis (strain ATCC 25285 / DSM 2151 / CCUG 4856 / JCM 11019 / LMG 10263 / NCTC 9343 / Onslow / VPI 2553 / EN-2).